Consider the following 194-residue polypeptide: RNA pyrophosphohydrolase (194 aa).

Residues Gly-6–Gln-149 enclose the Nudix hydrolase domain. The short motif at Gly-38 to Gly-59 is the Nudix box element. A disordered region spans residues Pro-158–Glu-194. The segment covering Arg-179–Glu-194 has biased composition (basic and acidic residues).

This sequence belongs to the Nudix hydrolase family. RppH subfamily. A divalent metal cation serves as cofactor.

Its function is as follows. Accelerates the degradation of transcripts by removing pyrophosphate from the 5'-end of triphosphorylated RNA, leading to a more labile monophosphorylated state that can stimulate subsequent ribonuclease cleavage. The chain is RNA pyrophosphohydrolase from Janthinobacterium sp. (strain Marseille) (Minibacterium massiliensis).